The following is a 410-amino-acid chain: Zinc transporter ttm-1 (410 aa).

Composition is skewed to low complexity over residues methionine 1–leucine 13 and serine 35–aspartate 46. The interval methionine 1 to lysine 94 is disordered. Topologically, residues methionine 1–lysine 103 are cytoplasmic. Residues histidine 50 to threonine 69 show a composition bias toward basic residues. Residues valine 104–phenylalanine 124 form a helical membrane-spanning segment. Residues tryptophan 125–leucine 129 are Extracellular-facing. The helical transmembrane segment at alanine 130–phenylalanine 150 threads the bilayer. The Cytoplasmic segment spans residues alanine 151–glutamate 171. A helical transmembrane segment spans residues valine 172 to valine 192. The Extracellular segment spans residues alanine 193 to valine 208. A helical transmembrane segment spans residues methionine 209–phenylalanine 229. The Cytoplasmic segment spans residues glycine 230 to alanine 258. Residues leucine 259 to isoleucine 279 traverse the membrane as a helical segment. Residue arginine 280 is a topological domain, extracellular. A helical transmembrane segment spans residues phenylalanine 281–phenylalanine 301. Residues threonine 302 to alanine 410 are Cytoplasmic-facing.

It belongs to the cation diffusion facilitator (CDF) transporter (TC 2.A.4) family. SLC30A subfamily. In terms of tissue distribution, isoform a: Expressed in the hypodermis and the intestine. Isoform b: Expressed in the intestine, head neurons, seam cells, hypodermis, and the vulva.

The protein resides in the cytoplasmic vesicle membrane. It is found in the apical cell membrane. Its function is as follows. Promotes excretion of zinc from intestinal cells into the intestinal lumen in response to increased dietary zinc. Involved in cadmium resistance, possibly by promoting its transport from cells. Involved in resistance to B.thuringiensis pore-forming toxin Cry5B downstream of the sek-1 and pmk-1 MAPK kinase pathway. The sequence is that of Zinc transporter ttm-1 from Caenorhabditis elegans.